Consider the following 145-residue polypeptide: MNLLQLGKLHENVLDAGCEPNRNARYLASLGYKVVGIDISERAISKAIDKTSSEKSNVNFNQRDFSRLNEFKGHFDTVIDIGCFHSILNSDHEPYTASLSHICHSDSSVFLRAFSETNKSRYRRWQGHKRYSLALKRNNVKKLSL.

This sequence belongs to the methyltransferase superfamily.

Functionally, probable methyltransferase. This is an uncharacterized protein from Schizosaccharomyces pombe (strain 972 / ATCC 24843) (Fission yeast).